The chain runs to 351 residues: Divinyl chlorophyll a/b light-harvesting protein PcbA (351 aa).

Helical transmembrane passes span F27 to L47, L64 to V84, V89 to L109, V202 to A222, A242 to C262, and L305 to L325.

This sequence belongs to the PsbB/PsbC family. IsiA/Pcb subfamily. As to quaternary structure, the antenna complex consists of divinyl chlorophylls (a and b) and divinyl chlorophyll a/b binding proteins and binds more divinyl chlorophyll b than does the antenna complex from high-light-adapted Prochlorococcus. It depends on divinyl chlorophyll a as a cofactor. Divinyl chlorophyll b is required as a cofactor.

The protein localises to the cellular thylakoid membrane. Functionally, the antenna complex functions as a light receptor, it captures and delivers excitation energy to photosystems II and I. The Prochlorales pcb genes are not related to higher plant LHCs. The chain is Divinyl chlorophyll a/b light-harvesting protein PcbA (pcbA) from Prochlorococcus marinus (strain SARG / CCMP1375 / SS120).